The following is a 124-amino-acid chain: Holo-[acyl-carrier-protein] synthase (124 aa).

2 residues coordinate Mg(2+): Asp8 and Glu56.

The protein belongs to the P-Pant transferase superfamily. AcpS family. It depends on Mg(2+) as a cofactor.

It is found in the cytoplasm. The enzyme catalyses apo-[ACP] + CoA = holo-[ACP] + adenosine 3',5'-bisphosphate + H(+). Its function is as follows. Transfers the 4'-phosphopantetheine moiety from coenzyme A to a Ser of acyl-carrier-protein. This Clostridium acetobutylicum (strain ATCC 824 / DSM 792 / JCM 1419 / IAM 19013 / LMG 5710 / NBRC 13948 / NRRL B-527 / VKM B-1787 / 2291 / W) protein is Holo-[acyl-carrier-protein] synthase.